A 489-amino-acid chain; its full sequence is Threonine/serine exporter (489 aa).

The next 10 helical transmembrane spans lie at 151–171 (GFPV…VLLG), 174–194 (WQVS…TSFL), 206–226 (VVGG…ALQF), 233–253 (SQII…VQSL), 268–288 (FFET…GIQL), 314–334 (IIAG…EWSS), 335–355 (VIIA…FVVY), 356–376 (LGPV…GGLL), 381–401 (LIPP…GLAI), and 420–440 (IAVA…GEWI). Positions 464–489 (FQEEAEQNQRRQRKRPKTNQRFGNKR) are disordered. Basic residues predominate over residues 473 to 489 (RRQRKRPKTNQRFGNKR).

It belongs to the ThrE exporter (TC 2.A.79) family.

It localises to the cell membrane. The catalysed reaction is L-threonine(in) + H(+)(out) = L-threonine(out) + H(+)(in). With respect to regulation, transport is inhibited by the proton ionophore carbonyl cyanide m-chlorophenylhydrazone (CCCP). Its function is as follows. Catalyzes the export of L-threonine and L-serine from the cell to the extracellular environment. Export is dependent on the proton motive force. The protein is Threonine/serine exporter of Corynebacterium glutamicum (Brevibacterium saccharolyticum).